The sequence spans 162 residues: Cadmium metallothionein (162 aa).

The propeptide occupies 1 to 2; it reads MD.

Its function is as follows. The metallothioneins are involved in the cellular sequestration of toxic metal ions. This chain is Cadmium metallothionein (MTT1), found in Tetrahymena thermophila.